Consider the following 209-residue polypeptide: Large ribosomal subunit protein uL3 (209 aa).

Gln150 carries the N5-methylglutamine modification.

The protein belongs to the universal ribosomal protein uL3 family. As to quaternary structure, part of the 50S ribosomal subunit. Forms a cluster with proteins L14 and L19. In terms of processing, methylated by PrmB.

In terms of biological role, one of the primary rRNA binding proteins, it binds directly near the 3'-end of the 23S rRNA, where it nucleates assembly of the 50S subunit. This is Large ribosomal subunit protein uL3 from Buchnera aphidicola subsp. Acyrthosiphon pisum (strain 5A).